We begin with the raw amino-acid sequence, 836 residues long: Protein AKNAD1 (836 aa).

Composition is skewed to polar residues over residues 159–172 (SWPK…TDQL), 181–192 (SNKPGSATTTEE), and 227–248 (SYQG…NTFK). 2 disordered regions span residues 159-248 (SWPK…NTFK) and 303-325 (LETT…KITE). A compositionally biased stretch (basic and acidic residues) spans 311–323 (CVEKQHQEQKGKI). A coiled-coil region spans residues 372-484 (QKISQGKQMC…DVKEKMDESK (113 aa)). Disordered stretches follow at residues 510 to 545 (SNEI…EAPN) and 575 to 596 (MRLS…DCAE).

The protein belongs to the AKNA family.

The polypeptide is Protein AKNAD1 (AKNAD1) (Homo sapiens (Human)).